The chain runs to 355 residues: Protein RecA (355 aa).

An ATP-binding site is contributed by 74-81; it reads GPESSGKT.

This sequence belongs to the RecA family.

It is found in the cytoplasm. Functionally, can catalyze the hydrolysis of ATP in the presence of single-stranded DNA, the ATP-dependent uptake of single-stranded DNA by duplex DNA, and the ATP-dependent hybridization of homologous single-stranded DNAs. It interacts with LexA causing its activation and leading to its autocatalytic cleavage. In Cytophaga hutchinsonii (strain ATCC 33406 / DSM 1761 / CIP 103989 / NBRC 15051 / NCIMB 9469 / D465), this protein is Protein RecA.